We begin with the raw amino-acid sequence, 1389 residues long: DNA-directed RNA polymerase subunit beta'' (1389 aa).

Residues Cys-224, Cys-295, Cys-302, and Cys-305 each coordinate Zn(2+).

This sequence belongs to the RNA polymerase beta' chain family. RpoC2 subfamily. As to quaternary structure, in plastids the minimal PEP RNA polymerase catalytic core is composed of four subunits: alpha, beta, beta', and beta''. When a (nuclear-encoded) sigma factor is associated with the core the holoenzyme is formed, which can initiate transcription. Zn(2+) serves as cofactor.

The protein resides in the plastid. The protein localises to the chloroplast. The enzyme catalyses RNA(n) + a ribonucleoside 5'-triphosphate = RNA(n+1) + diphosphate. DNA-dependent RNA polymerase catalyzes the transcription of DNA into RNA using the four ribonucleoside triphosphates as substrates. The protein is DNA-directed RNA polymerase subunit beta'' of Morus indica (Mulberry).